The primary structure comprises 263 residues: MDVMNAFDSQAEDSPTSLGRSLRRRPLARKKLSEMVEEELEQMIRRHEFGEGEQLPSERELMAFFNVGRPSVREALAALKRKGLVQINNGERARVSRPSADTIISELSGMAKDFLTHPGGIAHFEQLRLFFESSLVRYAAEHATDEQIALLTKALEINSQSLDDNALFIRSDVEFHRVLAEIPGNPIFMAIHVALLDWLIAARPSVPDRELHEHNNLSYQQHIVIVDAIRQRDPDKADRALQTHLNSVSATWHALGKKSQKMR.

The segment at 1-25 (MDVMNAFDSQAEDSPTSLGRSLRRR) is disordered. Residues 30 to 98 (KKLSEMVEEE…NGERARVSRP (69 aa)) form the HTH gntR-type domain. Positions 58–77 (ERELMAFFNVGRPSVREALA) form a DNA-binding region, H-T-H motif.

Belongs to the NanR family.

Functionally, transcriptional repressor that controls expression of the genes required for the catabolism of sialic acids. This Salmonella schwarzengrund (strain CVM19633) protein is HTH-type transcriptional repressor NanR.